The primary structure comprises 526 residues: mRNA export factor ICP27 homolog (526 aa).

Zn(2+)-binding residues include cysteine 239, histidine 344, cysteine 346, and cysteine 351. The CHC2-type zinc finger occupies 239–351 (CVFNDNGHGD…NNHQCDDIGC (113 aa)).

Belongs to the HHV-1 ICP27 protein family.

It is found in the virion tegument. The protein localises to the virion. Its subcellular location is the host nucleus. The protein resides in the host cytoplasm. Functionally, immediate early (EI) protein that plays many roles during productive infection including regulation of viral gene expression and nuclear export of intronless viral RNAs. This chain is mRNA export factor ICP27 homolog, found in Human herpesvirus 7 (strain JI) (HHV-7).